A 158-amino-acid chain; its full sequence is SsrA-binding protein (158 aa).

Belongs to the SmpB family.

The protein resides in the cytoplasm. Functionally, required for rescue of stalled ribosomes mediated by trans-translation. Binds to transfer-messenger RNA (tmRNA), required for stable association of tmRNA with ribosomes. tmRNA and SmpB together mimic tRNA shape, replacing the anticodon stem-loop with SmpB. tmRNA is encoded by the ssrA gene; the 2 termini fold to resemble tRNA(Ala) and it encodes a 'tag peptide', a short internal open reading frame. During trans-translation Ala-aminoacylated tmRNA acts like a tRNA, entering the A-site of stalled ribosomes, displacing the stalled mRNA. The ribosome then switches to translate the ORF on the tmRNA; the nascent peptide is terminated with the 'tag peptide' encoded by the tmRNA and targeted for degradation. The ribosome is freed to recommence translation, which seems to be the essential function of trans-translation. The polypeptide is SsrA-binding protein (Bifidobacterium longum (strain DJO10A)).